The primary structure comprises 135 residues: FK506-binding protein 2 (135 aa).

An N-terminal signal peptide occupies residues 1-20; the sequence is MRVPIITTLLTLALTGLSQA. Positions 40-128 constitute a PPIase FKBP-type domain; the sequence is GDTVKMHYRG…IFQTELLEIE (89 aa). The Prevents secretion from ER signature appears at 132–135; the sequence is KDEL.

It belongs to the FKBP-type PPIase family. FKBP2 subfamily.

The protein localises to the endoplasmic reticulum. The catalysed reaction is [protein]-peptidylproline (omega=180) = [protein]-peptidylproline (omega=0). Its activity is regulated as follows. Inhibited by both FK506 and rapamycin. PPIases accelerate the folding of proteins. It catalyzes the cis-trans isomerization of proline imidic peptide bonds in oligopeptides. This Emericella nidulans (strain FGSC A4 / ATCC 38163 / CBS 112.46 / NRRL 194 / M139) (Aspergillus nidulans) protein is FK506-binding protein 2 (fkbB).